A 186-amino-acid chain; its full sequence is Ribosome-recycling factor (186 aa).

It belongs to the RRF family.

The protein localises to the cytoplasm. Responsible for the release of ribosomes from messenger RNA at the termination of protein biosynthesis. May increase the efficiency of translation by recycling ribosomes from one round of translation to another. In Rickettsia akari (strain Hartford), this protein is Ribosome-recycling factor.